The chain runs to 139 residues: D-ribose pyranase (139 aa).

His-20 serves as the catalytic Proton donor. Residues Asp-28, His-106, and 128–130 (YAN) each bind substrate.

This sequence belongs to the RbsD / FucU family. RbsD subfamily. In terms of assembly, homodecamer.

It localises to the cytoplasm. It catalyses the reaction beta-D-ribopyranose = beta-D-ribofuranose. It participates in carbohydrate metabolism; D-ribose degradation; D-ribose 5-phosphate from beta-D-ribopyranose: step 1/2. Functionally, catalyzes the interconversion of beta-pyran and beta-furan forms of D-ribose. The polypeptide is D-ribose pyranase (Vibrio campbellii (strain ATCC BAA-1116)).